The sequence spans 111 residues: ATP synthase subunit c (111 aa).

Transmembrane regions (helical) follow at residues 38-58 (GLGV…GSGL) and 89-109 (AGIA…LIFV).

The protein belongs to the ATPase C chain family. As to quaternary structure, F-type ATPases have 2 components, F(1) - the catalytic core - and F(0) - the membrane proton channel. F(1) has five subunits: alpha(3), beta(3), gamma(1), delta(1), epsilon(1). F(0) has three main subunits: a(1), b(2) and c(10-14). The alpha and beta chains form an alternating ring which encloses part of the gamma chain. F(1) is attached to F(0) by a central stalk formed by the gamma and epsilon chains, while a peripheral stalk is formed by the delta and b chains.

It localises to the cell membrane. F(1)F(0) ATP synthase produces ATP from ADP in the presence of a proton or sodium gradient. F-type ATPases consist of two structural domains, F(1) containing the extramembraneous catalytic core and F(0) containing the membrane proton channel, linked together by a central stalk and a peripheral stalk. During catalysis, ATP synthesis in the catalytic domain of F(1) is coupled via a rotary mechanism of the central stalk subunits to proton translocation. In terms of biological role, key component of the F(0) channel; it plays a direct role in translocation across the membrane. A homomeric c-ring of between 10-14 subunits forms the central stalk rotor element with the F(1) delta and epsilon subunits. In Mycoplasmopsis synoviae (strain 53) (Mycoplasma synoviae), this protein is ATP synthase subunit c.